Reading from the N-terminus, the 444-residue chain is Methylenetetrahydrofolate--tRNA-(uracil-5-)-methyltransferase TrmFO (444 aa).

10–15 provides a ligand contact to FAD; that stretch reads GAGLAG.

It belongs to the MnmG family. TrmFO subfamily. Requires FAD as cofactor.

It localises to the cytoplasm. The catalysed reaction is uridine(54) in tRNA + (6R)-5,10-methylene-5,6,7,8-tetrahydrofolate + NADH + H(+) = 5-methyluridine(54) in tRNA + (6S)-5,6,7,8-tetrahydrofolate + NAD(+). It carries out the reaction uridine(54) in tRNA + (6R)-5,10-methylene-5,6,7,8-tetrahydrofolate + NADPH + H(+) = 5-methyluridine(54) in tRNA + (6S)-5,6,7,8-tetrahydrofolate + NADP(+). Functionally, catalyzes the folate-dependent formation of 5-methyl-uridine at position 54 (M-5-U54) in all tRNAs. The chain is Methylenetetrahydrofolate--tRNA-(uracil-5-)-methyltransferase TrmFO from Streptococcus sanguinis (strain SK36).